A 438-amino-acid polypeptide reads, in one-letter code: Methionine aminopeptidase 2 (438 aa).

The tract at residues 1–89 (MAAQAAPAEE…LFPNKQYPKG (89 aa)) is disordered. Residues 10–20 (ELSKLSVEETK) show a composition bias toward basic and acidic residues. A compositionally biased stretch (basic residues) spans 51–65 (AKKKKKRKPRKKKKA). His-191 contributes to the substrate binding site. Residues Asp-211, Asp-222, and His-291 each contribute to the a divalent metal cation site. His-299 contacts substrate. A divalent metal cation contacts are provided by Glu-324 and Glu-419.

Belongs to the peptidase M24A family. Methionine aminopeptidase eukaryotic type 2 subfamily. Requires Co(2+) as cofactor. Zn(2+) serves as cofactor. The cofactor is Mn(2+). It depends on Fe(2+) as a cofactor.

It is found in the cytoplasm. The catalysed reaction is Release of N-terminal amino acids, preferentially methionine, from peptides and arylamides.. Cotranslationally removes the N-terminal methionine from nascent proteins. The N-terminal methionine is often cleaved when the second residue in the primary sequence is small and uncharged (Met-Ala-, Cys, Gly, Pro, Ser, Thr, or Val). This Sordaria macrospora (strain ATCC MYA-333 / DSM 997 / K(L3346) / K-hell) protein is Methionine aminopeptidase 2.